A 432-amino-acid polypeptide reads, in one-letter code: MANVVVVGSQWGDEGKGKIVDWLSERADVVVRFQGGHNAGHTLVVDGKVYKLSLLPSGVVRQGKLSIIGNGVVFDPHAFVAEVAKLKAQGVEVTPDRLKIAENTALILSLHRELDGFREDAASNSGTKIGTTRRGIGPAYEDKVGRRAVRVMDLADLETLPLKVDRLLTHHNALRRGLGHGEVTHDAIMAELTSVADEILPYMDRVWKILDDKRRAGERILFEGAQGTLLDIDHGTYPFVTSSNTVAGQAAAGSGVGPGAIGYVLGITKAYTTRVGEGPFPTEQKNEIGEFLGTRGHEFGVVTGRKRRCGWFDAVLVRQAVAVNGIKGIALTKLDVLDGLDEIKVCTGYRLDGEMIDYLPASQGAQARVEPVYETLEGWKGTTAGARSWNDLPAQAVKYVRYIEELIGAPVALLSTSPERDDTILVTDPFQD.

GTP contacts are provided by residues 12–18 and 40–42; these read GDEGKGK and GHT. Asp13 acts as the Proton acceptor in catalysis. Residues Asp13 and Gly40 each coordinate Mg(2+). IMP-binding positions include 13 to 16, 38 to 41, Thr132, Arg146, Gln226, Thr241, and Arg305; these read DEGK and NAGH. Residue His41 is the Proton donor of the active site. Residue 301 to 307 coordinates substrate; sequence VVTGRKR. GTP-binding positions include Arg307, 333–335, and 415–417; these read KLD and STS.

This sequence belongs to the adenylosuccinate synthetase family. In terms of assembly, homodimer. Mg(2+) serves as cofactor.

It localises to the cytoplasm. The enzyme catalyses IMP + L-aspartate + GTP = N(6)-(1,2-dicarboxyethyl)-AMP + GDP + phosphate + 2 H(+). It participates in purine metabolism; AMP biosynthesis via de novo pathway; AMP from IMP: step 1/2. Plays an important role in the de novo pathway of purine nucleotide biosynthesis. Catalyzes the first committed step in the biosynthesis of AMP from IMP. The chain is Adenylosuccinate synthetase from Mesorhizobium japonicum (strain LMG 29417 / CECT 9101 / MAFF 303099) (Mesorhizobium loti (strain MAFF 303099)).